The primary structure comprises 750 residues: Photosystem I P700 chlorophyll a apoprotein A1 (750 aa).

The next 8 membrane-spanning stretches (helical) occupy residues 70–93 (VFSA…FHGA), 156–179 (LYCT…FHYH), 195–219 (LNHH…HVSL), 291–309 (IAHH…GHMY), 346–369 (WHAQ…HHMY), 385–411 (LSLF…IFMV), 433–455 (AIIS…LYIH), and 531–549 (FLVH…LILL). Positions 573 and 582 each coordinate [4Fe-4S] cluster. Transmembrane regions (helical) follow at residues 589–610 (HVFL…HFSW) and 664–686 (LSAY…MFLF). Histidine 675 provides a ligand contact to chlorophyll a'. 2 residues coordinate chlorophyll a: methionine 683 and tyrosine 691. Tryptophan 692 is a binding site for phylloquinone. Residues 724–744 (AVGVTHYLLGGIATTWAFFLA) traverse the membrane as a helical segment.

It belongs to the PsaA/PsaB family. The PsaA/B heterodimer binds the P700 chlorophyll special pair and subsequent electron acceptors. PSI consists of a core antenna complex that captures photons, and an electron transfer chain that converts photonic excitation into a charge separation. The eukaryotic PSI reaction center is composed of at least 11 subunits. P700 is a chlorophyll a/chlorophyll a' dimer, A0 is one or more chlorophyll a, A1 is one or both phylloquinones and FX is a shared 4Fe-4S iron-sulfur center. is required as a cofactor.

The protein localises to the plastid. The protein resides in the chloroplast thylakoid membrane. The enzyme catalyses reduced [plastocyanin] + hnu + oxidized [2Fe-2S]-[ferredoxin] = oxidized [plastocyanin] + reduced [2Fe-2S]-[ferredoxin]. Its function is as follows. PsaA and PsaB bind P700, the primary electron donor of photosystem I (PSI), as well as the electron acceptors A0, A1 and FX. PSI is a plastocyanin-ferredoxin oxidoreductase, converting photonic excitation into a charge separation, which transfers an electron from the donor P700 chlorophyll pair to the spectroscopically characterized acceptors A0, A1, FX, FA and FB in turn. Oxidized P700 is reduced on the lumenal side of the thylakoid membrane by plastocyanin. This Acorus calamus (Sweet flag) protein is Photosystem I P700 chlorophyll a apoprotein A1.